We begin with the raw amino-acid sequence, 191 residues long: Adenylate kinase (191 aa).

12–17 (GSGKTT) contributes to the ATP binding site. Positions 34 to 63 (STGDLLRAESAKKTERGLLIEKFTSQGELV) are NMP. Residues T35, R40, 61-63 (ELV), 88-91 (GYPR), and Q95 each bind AMP. Residues 130-136 (GRSRGAD) are LID. R131 is an ATP binding site. AMP-binding residues include R133 and R145. Position 173 (R173) interacts with ATP.

The protein belongs to the adenylate kinase family. In terms of assembly, monomer.

Its subcellular location is the cytoplasm. The catalysed reaction is AMP + ATP = 2 ADP. Its pathway is purine metabolism; AMP biosynthesis via salvage pathway; AMP from ADP: step 1/1. Catalyzes the reversible transfer of the terminal phosphate group between ATP and AMP. Plays an important role in cellular energy homeostasis and in adenine nucleotide metabolism. The sequence is that of Adenylate kinase from Helicobacter pylori (strain ATCC 700392 / 26695) (Campylobacter pylori).